The primary structure comprises 132 residues: Small ribosomal subunit protein uS8 (132 aa).

It belongs to the universal ribosomal protein uS8 family. In terms of assembly, part of the 30S ribosomal subunit. Contacts proteins S5 and S12.

One of the primary rRNA binding proteins, it binds directly to 16S rRNA central domain where it helps coordinate assembly of the platform of the 30S subunit. This chain is Small ribosomal subunit protein uS8, found in Anoxybacillus flavithermus (strain DSM 21510 / WK1).